Here is a 293-residue protein sequence, read N- to C-terminus: Ribosomal protein L11 methyltransferase (293 aa).

Threonine 145, glycine 166, aspartate 188, and asparagine 230 together coordinate S-adenosyl-L-methionine.

Belongs to the methyltransferase superfamily. PrmA family.

Its subcellular location is the cytoplasm. It carries out the reaction L-lysyl-[protein] + 3 S-adenosyl-L-methionine = N(6),N(6),N(6)-trimethyl-L-lysyl-[protein] + 3 S-adenosyl-L-homocysteine + 3 H(+). Its function is as follows. Methylates ribosomal protein L11. This Actinobacillus succinogenes (strain ATCC 55618 / DSM 22257 / CCUG 43843 / 130Z) protein is Ribosomal protein L11 methyltransferase.